The following is a 164-amino-acid chain: Phosphopantetheine adenylyltransferase (164 aa).

Substrate is bound at residue Ser-10. ATP is bound by residues Ser-10–Phe-11 and His-18. Substrate-binding residues include Lys-42, Thr-79, and Arg-93. Residues Gly-94 to Arg-96, Glu-104, and Val-129 to Ser-135 each bind ATP.

This sequence belongs to the bacterial CoaD family. As to quaternary structure, homohexamer. It depends on Mg(2+) as a cofactor.

The protein resides in the cytoplasm. It carries out the reaction (R)-4'-phosphopantetheine + ATP + H(+) = 3'-dephospho-CoA + diphosphate. It functions in the pathway cofactor biosynthesis; coenzyme A biosynthesis; CoA from (R)-pantothenate: step 4/5. In terms of biological role, reversibly transfers an adenylyl group from ATP to 4'-phosphopantetheine, yielding dephospho-CoA (dPCoA) and pyrophosphate. The chain is Phosphopantetheine adenylyltransferase from Bradyrhizobium sp. (strain ORS 278).